The chain runs to 111 residues: uncharacterized protein (111 aa).

The chain crosses the membrane as a helical span at residues 18 to 41 (FFYFFFISFYTLWIVFFLLHLSFF).

The protein localises to the membrane. This is an uncharacterized protein from Saccharomyces cerevisiae (strain ATCC 204508 / S288c) (Baker's yeast).